We begin with the raw amino-acid sequence, 362 residues long: Alpha-2-HS-glycoprotein (362 aa).

Residues Leu-1–Ala-15 form the signal peptide. One can recognise a Cystatin fetuin-A-type 1 domain in the interval Tyr-24–Asp-130. Cystine bridges form between Cys-29–Cys-353, Cys-86–Cys-97, Cys-111–Cys-129, Cys-143–Cys-146, Cys-205–Cys-216, and Cys-227–Cys-244. The N-linked (GlcNAc...) asparagine glycan is linked to Asn-96. Ser-131, Ser-132, and Ser-135 each carry phosphoserine. Positions Lys-141–Val-252 constitute a Cystatin fetuin-A-type 2 domain. N-linked (GlcNAc...) asparagine glycosylation is found at Asn-153 and Asn-173. Ser-314, Ser-318, Ser-321, and Ser-323 each carry phosphoserine. The O-linked (GalNAc...) threonine glycan is linked to Thr-332.

Belongs to the fetuin family. In terms of processing, phosphorylated by FAM20C in the extracellular medium. As to expression, expressed by the liver and secreted in plasma.

It localises to the secreted. The polypeptide is Alpha-2-HS-glycoprotein (AHSG) (Sus scrofa (Pig)).